The primary structure comprises 196 residues: Proteasome subunit beta 1 (196 aa).

A propeptide spans 1–6 (removed in mature form; by autocatalysis); sequence MEELPA. T7 serves as the catalytic Nucleophile.

Belongs to the peptidase T1B family. In terms of assembly, the 20S proteasome core is composed of 14 alpha and 14 beta subunits that assemble into four stacked heptameric rings, resulting in a barrel-shaped structure. The two inner rings, each composed of seven catalytic beta subunits, are sandwiched by two outer rings, each composed of seven alpha subunits. The catalytic chamber with the active sites is on the inside of the barrel. Has a gated structure, the ends of the cylinder being occluded by the N-termini of the alpha-subunits. Is capped at one or both ends by the proteasome regulatory ATPase, PAN.

The protein resides in the cytoplasm. The catalysed reaction is Cleavage of peptide bonds with very broad specificity.. With respect to regulation, the formation of the proteasomal ATPase PAN-20S proteasome complex, via the docking of the C-termini of PAN into the intersubunit pockets in the alpha-rings, triggers opening of the gate for substrate entry. Interconversion between the open-gate and close-gate conformations leads to a dynamic regulation of the 20S proteasome proteolysis activity. Functionally, component of the proteasome core, a large protease complex with broad specificity involved in protein degradation. This chain is Proteasome subunit beta 1, found in Saccharolobus solfataricus (strain ATCC 35092 / DSM 1617 / JCM 11322 / P2) (Sulfolobus solfataricus).